Consider the following 62-residue polypeptide: Protein YmcF (62 aa).

The protein belongs to the YmcF/YnqF peptide family.

The polypeptide is Protein YmcF (Escherichia coli (strain K12)).